A 424-amino-acid chain; its full sequence is Glutamyl-tRNA reductase (424 aa).

Substrate-binding positions include 49–52 (TCNR), Ser-107, 112–114 (EPQ), and Gln-118. Cys-50 (nucleophile) is an active-site residue. 187–192 (GAGETI) is a binding site for NADP(+).

Belongs to the glutamyl-tRNA reductase family. As to quaternary structure, homodimer.

The catalysed reaction is (S)-4-amino-5-oxopentanoate + tRNA(Glu) + NADP(+) = L-glutamyl-tRNA(Glu) + NADPH + H(+). It participates in porphyrin-containing compound metabolism; protoporphyrin-IX biosynthesis; 5-aminolevulinate from L-glutamyl-tRNA(Glu): step 1/2. Catalyzes the NADPH-dependent reduction of glutamyl-tRNA(Glu) to glutamate 1-semialdehyde (GSA). The protein is Glutamyl-tRNA reductase of Chromohalobacter salexigens (strain ATCC BAA-138 / DSM 3043 / CIP 106854 / NCIMB 13768 / 1H11).